We begin with the raw amino-acid sequence, 5005 residues long: Bridge-like lipid transfer protein family member 1 (5005 aa).

Residues N26–Y46 traverse the membrane as a helical segment. 3 disordered regions span residues L691–D721, L1218–A1257, and G1269–Q1310. Composition is skewed to low complexity over residues R700–P711 and S1226–S1240. Basic and acidic residues predominate over residues G1248–A1257. Over residues S1278–L1303 the composition is skewed to polar residues. 3 positions are modified to phosphoserine: S1301, S1305, and S1323. T1325 bears the Phosphothreonine mark. Disordered regions lie at residues S1343–F1376, E1400–D1427, T1521–F1548, and F1676–A1704. A phosphoserine mark is found at S1355 and S1406. The segment covering T1521–L1530 has biased composition (basic residues). Polar residues predominate over residues T1691–A1704. Residues S1805 and S1808 each carry the phosphoserine modification. Disordered stretches follow at residues D1924–P1991, S2401–V2420, and T2598–V2677. 4 stretches are compositionally biased toward polar residues: residues L1931–D1948, T1959–S1971, S2401–D2418, and T2598–F2608. Phosphoserine is present on residues S2601 and S2603. Over residues S2619–A2638 the composition is skewed to low complexity. Over residues T2643–T2665 the composition is skewed to basic and acidic residues. The residue at position 2755 (S2755) is a Phosphoserine. Residues R2928–L2967 form a disordered region. A compositionally biased stretch (polar residues) spans K2949–F2964. S3562 carries the post-translational modification Phosphoserine. The segment covering P3612 to A3622 has biased composition (polar residues). Disordered stretches follow at residues P3612–N3661, S3686–Y3744, R3821–Q3843, Y3914–G3954, G4088–S4146, and Q4325–S4394. The residue at position 3653 (S3653) is a Phosphoserine. Residues S3686–K3700 are compositionally biased toward polar residues. Positions E3727–E3736 are enriched in acidic residues. Residues R3821 to S3837 show a composition bias toward basic and acidic residues. 2 stretches are compositionally biased toward polar residues: residues T3931–L3940 and P4098–K4113. Residues L4122–S4146 are compositionally biased toward low complexity. Position 4124 is a phosphoserine (S4124). Over residues Q4325–K4358 the composition is skewed to polar residues. A compositionally biased stretch (low complexity) spans S4359–S4372. Positions K4381 to S4394 are enriched in polar residues.

As to expression, highly expressed in testis and ovary. Weakly or not expressed in other tissues.

It localises to the cell membrane. The protein resides in the endoplasmic reticulum membrane. The protein localises to the mitochondrion membrane. Functionally, tube-forming lipid transport protein which provides phosphatidylethanolamine for glycosylphosphatidylinositol (GPI) anchor synthesis in the endoplasmic reticulum. Plays a role in endosomal trafficking and endosome recycling. Also involved in the actin cytoskeleton and cilia structural dynamics. Acts as a regulator of phagocytosis. The protein is Bridge-like lipid transfer protein family member 1 of Homo sapiens (Human).